The chain runs to 467 residues: MGVSAVLLPLYLLAGVTSGLAVPASRNQSTCDTVDQGYQCFSETSHLWGQYAPFFSLANESAISPDVPAGCRVTFAQVLSRHGARYPTESKGKKYSALIEEIQQNVTTFDGKYAFLKTYNYSLGADDLTPFGEQELVNSGIKFYQRYESLTRNIIPFIRSSGSSRVIASGEKFIEGFQSTKLKDPRAQPGQSSPKIDVVISEASSSNNTLDPGTCTVFEDSELADTVEANFTATFAPSIRQRLENDLSGVTLTDTEVTYLMDMCSFDTISTSTVDTKLSPFCDLFTHDEWIHYDYLQSLKKYYGHGAGNPLGPTQGVGYANELIARLTHSPVHDDTSSNHTLDSNPATFPLNSTLYADFSHDNGIISILFALGLYNGTKPLSTTTVENITQTDGFSSAWTVPFASRLYVEMMQCQAEQEPLVRVLVNDRVVPLHGCPIDALGRCTRDSFVRGLSFARSGGDWAECSA.

Residues 1-23 form the signal peptide; that stretch reads MGVSAVLLPLYLLAGVTSGLAVP. A glycan (N-linked (GlcNAc...) asparagine) is linked at asparagine 27. A disulfide bridge links cysteine 31 with cysteine 40. 1D-myo-inositol hexakisphosphate is bound by residues glutamine 50 and tyrosine 51. A glycan (N-linked (GlcNAc...) asparagine) is linked at asparagine 59. 4 cysteine pairs are disulfide-bonded: cysteine 71–cysteine 414, cysteine 215–cysteine 465, cysteine 264–cysteine 282, and cysteine 436–cysteine 444. 1D-myo-inositol hexakisphosphate is bound by residues arginine 81, histidine 82, arginine 85, and threonine 88. Histidine 82 functions as the Nucleophile in the catalytic mechanism. 2 N-linked (GlcNAc...) asparagine glycosylation sites follow: asparagine 105 and asparagine 120. Residue arginine 165 coordinates 1D-myo-inositol hexakisphosphate. Asparagine 207 and asparagine 230 each carry an N-linked (GlcNAc...) asparagine glycan. Residue lysine 301 coordinates 1D-myo-inositol hexakisphosphate. Residues asparagine 339 and asparagine 352 are each glycosylated (N-linked (GlcNAc...) asparagine). Histidine 361 and aspartate 362 together coordinate 1D-myo-inositol hexakisphosphate. Asparagine 376 and asparagine 388 each carry an N-linked (GlcNAc...) asparagine glycan.

Belongs to the histidine acid phosphatase family. Monomer.

The protein resides in the secreted. It catalyses the reaction 1D-myo-inositol hexakisphosphate + H2O = 1D-myo-inositol 1,2,4,5,6-pentakisphosphate + phosphate. It carries out the reaction 1D-myo-inositol 1,2,4,5,6-pentakisphosphate + H2O = 1D-myo-inositol 1,2,5,6-tetrakisphosphate + phosphate. The catalysed reaction is 1D-myo-inositol 1,2,5,6-tetrakisphosphate + H2O = 1D-myo-inositol 1,2,6-trisphosphate + phosphate. The enzyme catalyses 1D-myo-inositol 1,2,6-trisphosphate + H2O = 1D-myo-inositol 1,2-bisphosphate + phosphate. It catalyses the reaction 1D-myo-inositol 1,2-bisphosphate + H2O = 1D-myo-inositol 2-phosphate + phosphate. Functionally, catalyzes the phosphate monoester hydrolysis of phytic acid (myo-inositol hexakisphosphate), which results in the stepwise formation of myo-inositol pentakis-, tetrakis-, tris-, bis-, and monophosphates, as well as the liberation of inorganic phosphate. Myo-inositol 2-monophosphate is the end product. The protein is Phytase A (phyA) of Aspergillus awamori (Black koji mold).